The primary structure comprises 461 residues: Thyroid hormone receptor beta (461 aa).

Residues 1–24 (MTPNSMTENRLPAWDKQKPHPDRG) are disordered. The interval 1-106 (MTPNSMTENR…IPSYLDKDEL (106 aa)) is modulating. A compositionally biased stretch (basic and acidic residues) spans 13 to 24 (AWDKQKPHPDRG). Residues cysteine 107, cysteine 110, cysteine 124, cysteine 127, cysteine 145, cysteine 151, cysteine 161, and cysteine 164 each coordinate Zn(2+). 2 NR C4-type zinc fingers span residues 107 to 127 (CVVC…CEGC) and 145 to 169 (CKYE…FKKC). Positions 107 to 181 (CVVCGDKATG…VGMATDLVLD (75 aa)) form a DNA-binding region, nuclear receptor. The 245-residue stretch at 217 to 461 (EEWELIKTVT…PPLFLEVFED (245 aa)) folds into the NR LBD domain. Residues 244 to 461 (KFLPEDIGQA…PPLFLEVFED (218 aa)) are interaction with NR2F6. 3,3',5-triiodo-L-thyronine is bound by residues arginine 282, asparagine 331, and histidine 435. The L-thyroxine site is built by arginine 282, asparagine 331, and histidine 435.

Belongs to the nuclear hormone receptor family. NR1 subfamily. In terms of assembly, binds DNA as a dimer; homodimer and heterodimer with RXRA. Interacts with the coactivators NCOA1/SRC1, NCOA2/GRIP1, NCOA7 and MED1/TRAP220 in a ligand-inducible manner. Interacts with the corepressor NCOR1 in absence of ligand. Interacts with C1D. Interacts with NR2F6; the interaction impairs the binding of the THRB homodimer and THRB:RXRB heterodimer to T3 response elements. Interacts with PRMT2 and THRSP. Interacts with TACC1; this interaction is decreased in the presence of thyroid hormone T3.

Its subcellular location is the nucleus. Nuclear hormone receptor that can act as a repressor or activator of transcription. High affinity receptor for thyroid hormones, including triiodothyronine and thyroxine. The protein is Thyroid hormone receptor beta (Thrb) of Rattus norvegicus (Rat).